The primary structure comprises 315 residues: Rhomboid-related protein 4 (315 aa).

The Cytoplasmic portion of the chain corresponds to 1–21; the sequence is MQRRSRGINTGLILLLSQIFH. The chain crosses the membrane as a helical span at residues 22-42; that stretch reads VGINNIPPVTLATLALNIWFF. The Extracellular segment spans residues 43-106; the sequence is LNPQKPLYSS…RRLGSRWFAY (64 aa). Residues 107 to 127 form a helical membrane-spanning segment; it reads VITAFSVLTGVVYLLLQFAVA. Residues 128–138 are Cytoplasmic-facing; that stretch reads EFMDEPDFKRS. Residues 139 to 157 traverse the membrane as a helical segment; sequence CAVGFSGVLFALKVLNNHY. The Nucleophile role is filled by serine 144. Residues 158–180 lie on the Extracellular side of the membrane; the sequence is CPGGFVNILGFPVPNRFACWVEL. A helical transmembrane segment spans residues 181-201; the sequence is VAIHLFSPGTSFAGHLAGILV. The active site involves histidine 195. Residues 202–315 lie on the Cytoplasmic side of the membrane; sequence GLMYTQGPLK…RQRLHRFDSQ (114 aa). The ubiquitin-binding domain (UBD) stretch occupies residues 269-284; that stretch reads SEEEQLERALQASLWD. A disordered region spans residues 283–315; sequence WDRGNTRNSPPPYGFHLSPEEMRRQRLHRFDSQ. Over residues 300-315 the composition is skewed to basic and acidic residues; that stretch reads SPEEMRRQRLHRFDSQ. A VCP/p97-interacting motif (VIM) region spans residues 301–315; the sequence is PEEMRRQRLHRFDSQ.

The protein belongs to the peptidase S54 family. Interacts (via C-terminal domain) with VCP. Interacts with ubiquitin and ubiquitinated proteins. Interacts with BIK and STEAP3. Expressed strongly in testis.

The protein localises to the endoplasmic reticulum membrane. Its subcellular location is the mitochondrion membrane. It catalyses the reaction Cleaves type-1 transmembrane domains using a catalytic dyad composed of serine and histidine that are contributed by different transmembrane domains.. Inhibited by aprotinin. In terms of biological role, intramembrane-cleaving serine protease that cleaves single transmembrane or multi-pass membrane proteins in the hydrophobic plane of the membrane, luminal loops and juxtamembrane regions. Involved in regulated intramembrane proteolysis and the subsequent release of functional polypeptides from their membrane anchors. Functional component of endoplasmic reticulum-associated degradation (ERAD) for misfolded membrane proteins. Required for the degradation process of some specific misfolded endoplasmic reticulum (ER) luminal proteins. Participates in the transfer of misfolded proteins from the ER to the cytosol, where they are destroyed by the proteasome in a ubiquitin-dependent manner. Functions in BIK, MPZ, PKD1, PTCRA, RHO, STEAP3 and TRAC processing. Involved in the regulation of exosomal secretion; inhibits the TSAP6-mediated secretion pathway. Involved in the regulation of apoptosis; modulates BIK-mediated apoptotic activity. Also plays a role in the regulation of spermatogenesis; inhibits apoptotic activity in spermatogonia. This Homo sapiens (Human) protein is Rhomboid-related protein 4 (RHBDD1).